Here is a 612-residue protein sequence, read N- to C-terminus: Sulfite reductase [NADPH] flavoprotein alpha-component (612 aa).

One can recognise a Flavodoxin-like domain in the interval 64–202 (VTLISASQTG…QAQQWRQQVV (139 aa)). FMN-binding positions include 70-75 (SQTGNA), 117-120 (STQG), and 153-162 (LGDTSYEHFC). Residues 247–461 (TAPLTAQLSV…IEHNDNFRLP (215 aa)) enclose the FAD-binding FR-type domain. FAD is bound by residues Thr335, Lys369, 399-402 (RLYS), 417-419 (TVG), Tyr423, and 432-435 (GGAS). NADP(+) is bound by residues 532–533 (SR), 538–542 (KIYVQ), and Asp574. Position 612 (Tyr612) interacts with FAD.

This sequence belongs to the NADPH-dependent sulphite reductase flavoprotein subunit CysJ family. In the N-terminal section; belongs to the flavodoxin family. It in the C-terminal section; belongs to the flavoprotein pyridine nucleotide cytochrome reductase family. Alpha(8)-beta(8). The alpha component is a flavoprotein, the beta component is a hemoprotein. The cofactor is FAD. It depends on FMN as a cofactor.

It catalyses the reaction hydrogen sulfide + 3 NADP(+) + 3 H2O = sulfite + 3 NADPH + 4 H(+). It functions in the pathway sulfur metabolism; hydrogen sulfide biosynthesis; hydrogen sulfide from sulfite (NADPH route): step 1/1. In terms of biological role, component of the sulfite reductase complex that catalyzes the 6-electron reduction of sulfite to sulfide. This is one of several activities required for the biosynthesis of L-cysteine from sulfate. The flavoprotein component catalyzes the electron flow from NADPH -&gt; FAD -&gt; FMN to the hemoprotein component. The protein is Sulfite reductase [NADPH] flavoprotein alpha-component of Yersinia pseudotuberculosis serotype O:1b (strain IP 31758).